The following is a 202-amino-acid chain: Transcription factor IBH1 (202 aa).

The segment covering 1–16 (MDAKRTPPPPTPPNPN) has biased composition (pro residues). A disordered region spans residues 1-33 (MDAKRTPPPPTPPNPNPSVIGSGAAADGGGFGR). The region spanning 136–185 (TSAAARAVPPPPRQQGEPPRADALRRLVPGGAGMEYSSLLEETADYLRSL) is the bHLH domain.

Belongs to the bHLH protein family. As to quaternary structure, interacts with ILI1.

In terms of biological role, atypical and probable non DNA-binding bHLH transcription factor that acts as a negative regulator of cell elongation and plant development. Binds the transcription factor ILI1 and forms a heterodimer of antagonistic bHLH transcription factors that function downstream of BZR1 to mediate brassinosteroid regulation of cell elongation and lamina inclination. This Oryza sativa subsp. indica (Rice) protein is Transcription factor IBH1 (IBH1).